The sequence spans 155 residues: Putative pre-16S rRNA nuclease (155 aa).

The disordered stretch occupies residues 136–155; that stretch reads DAERATSRPPGHPVEPRIGP.

This sequence belongs to the YqgF nuclease family.

It localises to the cytoplasm. Could be a nuclease involved in processing of the 5'-end of pre-16S rRNA. The sequence is that of Putative pre-16S rRNA nuclease from Leifsonia xyli subsp. xyli (strain CTCB07).